The sequence spans 231 residues: 5'-methylthioadenosine/S-adenosylhomocysteine nucleosidase (231 aa).

Residue Glu-12 is the Proton acceptor of the active site. Residues Gly-78, Met-153, and 174–175 (ME) each bind substrate. Asp-198 serves as the catalytic Proton donor.

This sequence belongs to the PNP/UDP phosphorylase family. MtnN subfamily.

It catalyses the reaction S-adenosyl-L-homocysteine + H2O = S-(5-deoxy-D-ribos-5-yl)-L-homocysteine + adenine. The enzyme catalyses S-methyl-5'-thioadenosine + H2O = 5-(methylsulfanyl)-D-ribose + adenine. The catalysed reaction is 5'-deoxyadenosine + H2O = 5-deoxy-D-ribose + adenine. It participates in amino-acid biosynthesis; L-methionine biosynthesis via salvage pathway; S-methyl-5-thio-alpha-D-ribose 1-phosphate from S-methyl-5'-thioadenosine (hydrolase route): step 1/2. In terms of biological role, catalyzes the irreversible cleavage of the glycosidic bond in both 5'-methylthioadenosine (MTA) and S-adenosylhomocysteine (SAH/AdoHcy) to adenine and the corresponding thioribose, 5'-methylthioribose and S-ribosylhomocysteine, respectively. Also cleaves 5'-deoxyadenosine, a toxic by-product of radical S-adenosylmethionine (SAM) enzymes, into 5-deoxyribose and adenine. The chain is 5'-methylthioadenosine/S-adenosylhomocysteine nucleosidase from Bacillus velezensis (strain DSM 23117 / BGSC 10A6 / LMG 26770 / FZB42) (Bacillus amyloliquefaciens subsp. plantarum).